The sequence spans 247 residues: Triosephosphate isomerase (247 aa).

The substrate site is built by Asn-10 and Lys-12. Residue His-94 is the Electrophile of the active site. The active-site Proton acceptor is the Glu-164.

This sequence belongs to the triosephosphate isomerase family. Homodimer.

It catalyses the reaction D-glyceraldehyde 3-phosphate = dihydroxyacetone phosphate. It functions in the pathway carbohydrate biosynthesis; gluconeogenesis. The protein operates within carbohydrate degradation; glycolysis; D-glyceraldehyde 3-phosphate from glycerone phosphate: step 1/1. The polypeptide is Triosephosphate isomerase (Tpi) (Drosophila simulans (Fruit fly)).